The following is an 837-amino-acid chain: Zinc fingers and homeoboxes protein 2 (837 aa).

An interaction with EFNB1 region spans residues 27–77 (VDRAKEKGIGTPQPDVAKDSWAAELENSSKENEVIEVKSMGESQSKKLQGG). A Phosphothreonine modification is found at Thr37. Lys64 participates in a covalent cross-link: Glycyl lysine isopeptide (Lys-Gly) (interchain with G-Cter in SUMO2). 2 consecutive C2H2-type zinc fingers follow at residues 78 to 101 (YECK…DMQH) and 110 to 133 (YVCA…SKFH). Low complexity predominate over residues 164-180 (SITTSGPGTGDSDSGIS). Residues 164-204 (SITTSGPGTGDSDSGISVSKTPIMKPGKPKADAKKVPKKPE) form a disordered region. Positions 192 to 204 (PKADAKKVPKKPE) are enriched in basic and acidic residues. The required for homodimerization stretch occupies residues 195-358 (DAKKVPKKPE…PAQLAPTKVT (164 aa)). Thr207 carries the post-translational modification Phosphothreonine. 4 consecutive DNA-binding regions (homeobox) follow at residues 263 to 324 (NTTK…WSPE), 439 to 501 (TPAS…IVHI), 530 to 591 (PQKF…EQAV), and 628 to 690 (SPSP…TVKW). The interval 263 to 446 (NTTKYNSALD…PLTPASDRKK (184 aa)) is required for repressor activity. The interval 263-497 (NTTKYNSALD…SDHRYRCQRG (235 aa)) is required for interaction with NFYA. A required for nuclear localization region spans residues 317–446 (HGISWSPEEV…PLTPASDRKK (130 aa)). The interval 404-445 (GQKRPLVTPQAAPEPKRPHIAQVPEPPPKVANPPLTPASDRK) is disordered. A compositionally biased stretch (pro residues) spans 427 to 439 (PEPPPKVANPPLT). A Glycyl lysine isopeptide (Lys-Gly) (interchain with G-Cter in SUMO2) cross-link involves residue Lys455. The interval 755–837 (PAKDCLPAKP…DCVPAEAGQA (83 aa)) is disordered. A phosphoserine mark is found at Ser825 and Ser827.

This sequence belongs to the ZHX family. In terms of assembly, homodimer (via homeobox domain). Heterodimer with ZHX1 (via homeobox domain 1). Heterodimer with ZHX3 (via homeobox domain 1). Heterodimerization with ZHX1 is not necessary for repressor activity. Interacts (via homeobox domain) with NFYA (via N-terminus). Interacts with EFNB1 intracellular domain peptide; the interaction enhances ZHX2 transcriptional repression activity. In terms of tissue distribution, ubiquitously expressed. Expressed in podocytes.

It is found in the nucleus. In terms of biological role, acts as a transcriptional repressor. Represses the promoter activity of the CDC25C gene stimulated by NFYA. May play a role in retinal development where it regulates the composition of bipolar cell populations, by promoting differentiation of bipolar OFF-type cells. In the brain, may promote maintenance and suppress differentiation of neural progenitor cells in the developing cortex. The sequence is that of Zinc fingers and homeoboxes protein 2 (ZHX2) from Homo sapiens (Human).